A 1067-amino-acid polypeptide reads, in one-letter code: Zinc finger MIZ domain-containing protein 1 (1067 aa).

Residues 1 to 120 (MNSMDRHIQQ…HQKSRQSDPP (120 aa)) form a sufficient for transactivation activity; sufficient for interaction with NOTCH1 region. Lys91 is covalently cross-linked (Glycyl lysine isopeptide (Lys-Gly) (interchain with G-Cter in SUMO2)). 2 disordered regions span residues 112-141 (QKSR…TLSH) and 327-542 (NSQF…PFPP). Over residues 128–141 (PLSSMSSMKPTLSH) the composition is skewed to low complexity. Polar residues predominate over residues 413–429 (YGNQQYGPNSQFPTQPG). Over residues 431 to 440 (YPAPNPPRPL) the composition is skewed to pro residues. The segment covering 479–497 (NNTFSGSSYSNYSQGNVNR) has biased composition (low complexity). Positions 510–521 (SPVPGNPTPPMT) are enriched in pro residues. An SP-RING-type zinc finger spans residues 727-808 (GEDGVEQTAI…MWGILNAIQH (82 aa)). Positions 758, 760, 781, and 784 each coordinate Zn(2+). Residues Lys834 and Lys843 each participate in a glycyl lysine isopeptide (Lys-Gly) (interchain with G-Cter in SUMO2) cross-link. Positions 837 to 1067 (PDGIPSKRFK…DDLLSLFENN (231 aa)) are transactivation domain. The segment covering 868–879 (GPSPYPLPPPPG) has biased composition (pro residues). The tract at residues 868 to 1067 (GPSPYPLPPP…DDLLSLFENN (200 aa)) is disordered. Polar residues-rich tracts occupy residues 881–895 (TNSN…NYQG) and 951–961 (SSDQPHPSIQQ). Over residues 981–996 (APPPPPSQPPRQPPQA) the composition is skewed to pro residues. Over residues 1040 to 1067 (PDELLSYLDPPDLPSNSNDDLLSLFENN) the composition is skewed to low complexity.

Interacts with AR, but not with ESR1, NR3C1, PGR, THRB nor VDR. Interacts with NOTCH1 and RBPJ. Interacts with SMARCA4. Interacts (via SP-RING-type domain) with SMAD3 and SMAD4 (via MH2 domain). As to expression, expressed most abundantly in ovary and, at lower levels, in prostate, spleen and testis. Weak expression, if any, in thymus, small intestine, colon and peripheral blood leukocytes.

It localises to the nucleus. It is found in the nucleoplasm. The protein localises to the cytoplasm. Functionally, acts as a transcriptional coactivator. Increases ligand-dependent transcriptional activity of AR and promotes AR sumoylation. The stimulation of AR activity is dependent upon sumoylation. Also functions as a transcriptional coactivator in the TGF-beta signaling pathway by increasing the activity of the SMAD3/SMAD4 transcriptional complex. Involved in transcriptional activation of a subset of NOTCH1 target genes including MYC. Involved in thymocyte and T cell development. Involved in the regulation of postmitotic positioning of pyramidal neurons in the developing cerebral cortex. In Homo sapiens (Human), this protein is Zinc finger MIZ domain-containing protein 1.